The sequence spans 49 residues: U3-plectoxin-Pt1a (49 aa).

5 disulfide bridges follow: Cys-2-Cys-16, Cys-9-Cys-30, Cys-15-Cys-41, Cys-32-Cys-39, and Cys-45-Cys-49.

Expressed by the venom gland.

Its subcellular location is the secreted. Potent toxin that may paralyze and/or kill insect pests such as H.virescens (lepidoptera), S.exigua (beet armyworm) and M.sexta (tobacco hornworm). In Plectreurys tristis (Spider), this protein is U3-plectoxin-Pt1a.